A 1715-amino-acid polypeptide reads, in one-letter code: Protein PHYLLO, chloroplastic (1715 aa).

Residues Met-1 to Arg-19 constitute a chloroplast transit peptide. An inactive isochorismate synthase region spans residues Tyr-20–His-273. The tract at residues Asn-363 to Leu-933 is 2-succinyl-5-enolpyruvyl-6-hydroxy-3-cyclohexene-1-carboxylate synthase. The helical transmembrane segment at Ala-429 to Ala-449 threads the bilayer. An O-succinylbenzoate synthase region spans residues Phe-981–Gly-1364. Lys-1170 functions as the Proton donor; for the o-succinylbenzoate synthase activity in the catalytic mechanism. Mg(2+)-binding residues include Asp-1202, Glu-1228, and Asp-1251. The active-site Proton acceptor; for the o-succinylbenzoate synthase activity is Lys-1279. Residues His-1418–Met-1715 are 2-succinyl-6-hydroxy-2,4-cyclohexadiene-1-carboxylate synthase. Positions Leu-1435–Pro-1540 constitute an AB hydrolase-1 domain.

In the N-terminal section; belongs to the isochorismate synthase family. This sequence in the 2nd section; belongs to the TPP enzyme family. MenD subfamily. It in the 3rd section; belongs to the mandelate racemase/muconate lactonizing enzyme family. MenC type 1 subfamily. The protein in the C-terminal section; belongs to the AB hydrolase superfamily. MenH family. Mg(2+) is required as a cofactor. Requires Mn(2+) as cofactor. It depends on thiamine diphosphate as a cofactor.

The protein localises to the plastid. The protein resides in the chloroplast membrane. It catalyses the reaction isochorismate + 2-oxoglutarate + H(+) = 5-enolpyruvoyl-6-hydroxy-2-succinyl-cyclohex-3-ene-1-carboxylate + CO2. It carries out the reaction (1R,6R)-6-hydroxy-2-succinyl-cyclohexa-2,4-diene-1-carboxylate = 2-succinylbenzoate + H2O. The enzyme catalyses 5-enolpyruvoyl-6-hydroxy-2-succinyl-cyclohex-3-ene-1-carboxylate = (1R,6R)-6-hydroxy-2-succinyl-cyclohexa-2,4-diene-1-carboxylate + pyruvate. Multifunctional enzyme required for phylloquinone (vitamin K1) biosynthesis. This chain is Protein PHYLLO, chloroplastic (PHYLLO), found in Arabidopsis thaliana (Mouse-ear cress).